The primary structure comprises 100 residues: Integration host factor subunit beta (100 aa).

Belongs to the bacterial histone-like protein family. Heterodimer of an alpha and a beta chain.

Its function is as follows. This protein is one of the two subunits of integration host factor, a specific DNA-binding protein that functions in genetic recombination as well as in transcriptional and translational control. The chain is Integration host factor subunit beta from Rhodospirillum rubrum (strain ATCC 11170 / ATH 1.1.1 / DSM 467 / LMG 4362 / NCIMB 8255 / S1).